The following is a 544-amino-acid chain: Regulator of G-protein signaling 14 (544 aa).

The tract at residues 19–59 (VSDGELTSTSGSQAQGEGRGSSLSIHSLPSGPSSPFSTDEQ) is disordered. Residues serine 20, serine 42, serine 45, serine 143, serine 199, serine 203, serine 218, and serine 286 each carry the phosphoserine modification. Over residues 23 to 58 (ELTSTSGSQAQGEGRGSSLSIHSLPSGPSSPFSTDE) the composition is skewed to polar residues. The RGS domain maps to 67 to 184 (SFERLLQDPR…VKSPLYQECL (118 aa)). Residues 191–220 (RPLREPGSSHLGSPDTARKKPKLKPGKSLP) form a disordered region. Residues 297 to 424 (RPGKYCCVYL…LHRPGEKQLV (128 aa)) are necessary for interaction with RABGEF1. RBD domains lie at 300–371 (KYCC…LENR) and 373–443 (TFQL…LDTL). Residues 449–493 (REASSIPPCRSQGCLPRTQTKDSHLPPLSSSLSVEDASGSTGKRQ) form a disordered region. At serine 481 the chain carries Phosphoserine. The GoLoco domain maps to 497–519 (IEGLVELLNRVQSSGAHDQRGLL).

In terms of assembly, interacts with GNAI1, GNAI2 and GNAI3. Interacts with GNAO1. Interacts (via RGS and GoLoco domains) with GNAI1; the interaction occurs in the centrosomes. Interaction with GNAI1 or GNAI3 (via active GTP- or inactive GDP-bound forms) prevents association of RGS14 with centrosomes or nuclear localization. Interacts with RABGEF1; the interactions is GTP-dependent. Interacts with RAP2A; the interactions is GTP-dependent and does not alter its function on G(i) alpha subunits either as GAP or as GDI. Associates with microtubules. Found in a complex with at least BRAF, HRAS, MAP2K1, MAPK3 and RGS14. Interacts with RIC8A (via C-terminus). Interacts (via RBD 1 domain) with HRAS (active GTP-bound form preferentially). Interacts (via RBD domains) with BRAF (via N-terminus); the interaction mediates the formation of a ternary complex with RAF1. Interacts (via RBD domains) with RAF1 (via N-terminus); the interaction mediates the formation of a ternary complex with BRAF. Interacts with KRAS (active GTP-bound form preferentially), MRAS (active GTP-bound form preferentially), NRAS (active GTP-bound form preferentially) and RRAS (active GTP-bound form preferentially). Post-translationally, phosphorylated by PKC. Phosphorylation is increased in presence of forskolin and may enhance the GDI activity on G(i) alpha subunit GNAI1. Expressed in neurons of the V2 secondary visual cortex area (at protein level). Expressed at high levels in the brain cortex, hippocampus, striatum, thalamus and substantia nigra, in the lung, and spleen. Low expression has been found in heart, liver, skeletal muscle and testis.

It localises to the nucleus. The protein localises to the PML body. Its subcellular location is the cytoplasm. The protein resides in the membrane. It is found in the cell membrane. It localises to the cytoskeleton. The protein localises to the microtubule organizing center. Its subcellular location is the centrosome. The protein resides in the spindle. It is found in the spindle pole. It localises to the cell projection. The protein localises to the dendrite. Its subcellular location is the dendritic spine. The protein resides in the postsynaptic density. Regulates G protein-coupled receptor signaling cascades. Inhibits signal transduction by increasing the GTPase activity of G protein alpha subunits, thereby driving them into their inactive GDP-bound form. Besides, modulates signal transduction via G protein alpha subunits by functioning as a GDP-dissociation inhibitor (GDI). Has GDI activity on G(i) alpha subunits GNAI1 and GNAI3, but not on GNAI2 and G(o)-alpha subunit GNAO1. Has GAP activity on GNAI0, GNAI2 and GNAI3. May act as a scaffold integrating G protein and Ras/Raf MAPkinase signaling pathways. Inhibits platelet-derived growth factor (PDGF)-stimulated ERK1/ERK2 phosphorylation; a process depending on its interaction with HRAS and that is reversed by G(i) alpha subunit GNAI1. Acts as a positive modulator of microtubule polymerisation and spindle organization through a G(i)-alpha-dependent mechanism. Plays a role in cell division; required for completion of the first mitotic division of the embryo. Involved in visual memory processing capacity; when overexpressed in the V2 secondary visual cortex area. Involved in hippocampal-based learning and memory; acts as a suppressor of synaptic plasticity in CA2 neurons. Required for the nerve growth factor (NGF)-mediated neurite outgrowth. Involved in stress resistance. This Rattus norvegicus (Rat) protein is Regulator of G-protein signaling 14 (Rgs14).